Consider the following 534-residue polypeptide: MSNANLRKWVGFCFVAIYLFLGVPLWYKLTTVYRASLPINYIESLQNNKFQDIHLVIPVYVKSDTYRFPDVHDAIQVQVNHLLNSQEQRVPWSLQVLPYNETIEQMESEGNQFHVVTLKLDEFIGYSSAYDTKETLVYYDDAAVLSNDLPFFVAQTLVEHTFQLEWTHLNKTCEGVSTNNDVAISYDPNIHLSVTLLSGDGNPVAWEIEPTLTDYFSPFRKFLSPLVNFTVDSSIVYHNDLNLHSLNGSCTSVTWFDLSHTIDLSELSSMAYYPEDSALNLAIVFPSASSSPDGLAFINGTRISDEITTLDWNSYLVPQWGVIIINKMPLKPNSVISEDYLEPMMYRFATDIFQLLGLTEGSQDLLSPYITIDSFKRLTILQNLDKATETLWSLVKLTQQFQGMSIPREVSDNVIEALDLRLQIIDLLNDPGKGGDIVWNNALHLSNELVKLCEKAFFNGEMVQQNFFPQEHMIAVYLPLLGPISAVMFFGFYNVMKEKNQKSKKNGTEREVAKEKLELKEAQKLHAIDGEDEL.

Residues 1–8 (MSNANLRK) are Cytoplasmic-facing. The chain crosses the membrane as a helical span at residues 9–29 (WVGFCFVAIYLFLGVPLWYKL). At 30–472 (TTVYRASLPI…VQQNFFPQEH (443 aa)) the chain is on the lumenal side. 5 N-linked (GlcNAc...) asparagine glycosylation sites follow: N100, N170, N228, N247, and N299. The chain crosses the membrane as a helical span at residues 473–493 (MIAVYLPLLGPISAVMFFGFY). At 494-534 (NVMKEKNQKSKKNGTEREVAKEKLELKEAQKLHAIDGEDEL) the chain is on the cytoplasmic side.

Belongs to the PIGS family. In terms of assembly, forms a complex with CDC91, GPI16, GPI8 and GAA1. N-glycosylated.

It localises to the endoplasmic reticulum membrane. Its pathway is glycolipid biosynthesis; glycosylphosphatidylinositol-anchor biosynthesis. Its function is as follows. Component of the GPI transamidase complex. Involved in transfer of GPI to proteins. The sequence is that of GPI transamidase component GPI17 (GPI17) from Saccharomyces cerevisiae (strain ATCC 204508 / S288c) (Baker's yeast).